Here is a 198-residue protein sequence, read N- to C-terminus: Protein GrpE (198 aa).

This sequence belongs to the GrpE family. As to quaternary structure, homodimer.

It is found in the cytoplasm. Its function is as follows. Participates actively in the response to hyperosmotic and heat shock by preventing the aggregation of stress-denatured proteins, in association with DnaK and GrpE. It is the nucleotide exchange factor for DnaK and may function as a thermosensor. Unfolded proteins bind initially to DnaJ; upon interaction with the DnaJ-bound protein, DnaK hydrolyzes its bound ATP, resulting in the formation of a stable complex. GrpE releases ADP from DnaK; ATP binding to DnaK triggers the release of the substrate protein, thus completing the reaction cycle. Several rounds of ATP-dependent interactions between DnaJ, DnaK and GrpE are required for fully efficient folding. The chain is Protein GrpE from Vibrio harveyi (Beneckea harveyi).